We begin with the raw amino-acid sequence, 345 residues long: Phosphate acyltransferase (345 aa).

This sequence belongs to the PlsX family. In terms of assembly, homodimer. Probably interacts with PlsY.

It localises to the cytoplasm. It catalyses the reaction a fatty acyl-[ACP] + phosphate = an acyl phosphate + holo-[ACP]. It functions in the pathway lipid metabolism; phospholipid metabolism. In terms of biological role, catalyzes the reversible formation of acyl-phosphate (acyl-PO(4)) from acyl-[acyl-carrier-protein] (acyl-ACP). This enzyme utilizes acyl-ACP as fatty acyl donor, but not acyl-CoA. The chain is Phosphate acyltransferase from Anaplasma phagocytophilum (strain HZ).